The sequence spans 424 residues: Mitogen-activated protein kinase 9 (424 aa).

The Protein kinase domain maps to 26-321 (YQQLKPIGSG…VDEALRHPYI (296 aa)). ATP is bound by residues 32 to 40 (IGSGAQGIV) and lysine 55. Aspartate 151 (proton acceptor) is an active-site residue. Position 183 is a phosphothreonine; by MAP2K7 (threonine 183). The short motif at 183-185 (TPY) is the TXY element. Tyrosine 185 is subject to Phosphotyrosine; by MAP2K4. The tract at residues 368–424 (KNGVVKDQPSDAAVSSNATPSQSSSINDISSMSTEQTLASDTDSSLDASTGPLEGCR) is disordered. Residues 388-417 (SQSSSINDISSMSTEQTLASDTDSSLDAST) are compositionally biased toward low complexity.

It belongs to the protein kinase superfamily. CMGC Ser/Thr protein kinase family. MAP kinase subfamily. In terms of assembly, interacts with MECOM. Interacts with DCLK2. Binds to at least four scaffolding proteins, MAPK8IP1/JIP-1, MAPK8IP2/JIP-2, MAPK8IP3/JIP-3/JSAP1 and SPAG9/MAPK8IP4/JIP-4. These proteins also bind other components of the JNK signaling pathway. Interacts with NFATC4. Interacts with ATF7; the interaction does not phosphorylate ATF7 but acts as a docking site for ATF7-associated partners such as JUN. Interacts with BCL10. Interacts with CTNNB1 and GSK3B. Interacts with MAPKBP1. Interacts with POU5F1; phosphorylates POU5F1 at 'Ser-355'. Found in a complex with SH3RF1, RAC2, MAP3K7/TAK1, MAP2K7/MKK7, MAPK8IP1/JIP1 and MAPK8/JNK1. It depends on Mg(2+) as a cofactor. Post-translationally, dually phosphorylated on Thr-183 and Tyr-185 by MAP2K7 and MAP2K4, which activates the enzyme. Autophosphorylated in vitro.

It localises to the cytoplasm. It is found in the nucleus. The enzyme catalyses L-seryl-[protein] + ATP = O-phospho-L-seryl-[protein] + ADP + H(+). It carries out the reaction L-threonyl-[protein] + ATP = O-phospho-L-threonyl-[protein] + ADP + H(+). Activated by threonine and tyrosine phosphorylation by either of two dual specificity kinases, MAP2K4 and MAP2K7. MAP2K4 shows a strong preference for Tyr-185 while MAP2K7 phosphorylates Tyr-183 preferentially. Inhibited by dual specificity phosphatases, such as DUSP1. Functionally, serine/threonine-protein kinase involved in various processes such as cell proliferation, differentiation, migration, transformation and programmed cell death. Extracellular stimuli such as pro-inflammatory cytokines or physical stress stimulate the stress-activated protein kinase/c-Jun N-terminal kinase (SAP/JNK) signaling pathway. In this cascade, two dual specificity kinases MAP2K4/MKK4 and MAP2K7/MKK7 phosphorylate and activate MAPK9/JNK2. In turn, MAPK9/JNK2 phosphorylates a number of transcription factors, primarily components of AP-1 such as JUN and ATF2 and thus regulates AP-1 transcriptional activity. In response to oxidative or ribotoxic stresses, inhibits rRNA synthesis by phosphorylating and inactivating the RNA polymerase 1-specific transcription initiation factor RRN3. Promotes stressed cell apoptosis by phosphorylating key regulatory factors including TP53 and YAP1. In T-cells, MAPK8 and MAPK9 are required for polarized differentiation of T-helper cells into Th1 cells. Upon T-cell receptor (TCR) stimulation, is activated by CARMA1, BCL10, MAP2K7 and MAP3K7/TAK1 to regulate JUN protein levels. Plays an important role in the osmotic stress-induced epithelial tight-junctions disruption. When activated, promotes beta-catenin/CTNNB1 degradation and inhibits the canonical Wnt signaling pathway. Also participates in neurite growth in spiral ganglion neurons. Phosphorylates the CLOCK-BMAL1 heterodimer and plays a role in the regulation of the circadian clock. Phosphorylates POU5F1, which results in the inhibition of POU5F1's transcriptional activity and enhances its proteasomal degradation. Phosphorylates ALKBH5 in response to reactive oxygen species (ROS), promoting ALKBH5 sumoylation and inactivation. MAPK9 isoforms display different binding patterns: alpha-1 and alpha-2 preferentially bind to JUN, whereas beta-1 and beta-2 bind to ATF2. However, there is no correlation between binding and phosphorylation, which is achieved at about the same efficiency by all isoforms. JUNB is not a substrate for JNK2 alpha-2, and JUND binds only weakly to it. In Homo sapiens (Human), this protein is Mitogen-activated protein kinase 9 (MAPK9).